A 226-amino-acid polypeptide reads, in one-letter code: Acyl-homoserine-lactone synthase (226 aa).

The protein belongs to the autoinducer synthase family.

The catalysed reaction is a fatty acyl-[ACP] + S-adenosyl-L-methionine = an N-acyl-L-homoserine lactone + S-methyl-5'-thioadenosine + holo-[ACP] + H(+). Its function is as follows. Required for the synthesis of OHHL (N-(3-oxohexanoyl)-L-homoserine lactone), an autoinducer molecule. The polypeptide is Acyl-homoserine-lactone synthase (psyI) (Pseudomonas amygdali pv. tabaci (Pseudomonas syringae pv. tabaci)).